The primary structure comprises 250 residues: Cobalt transport protein CbiM (250 aa).

Residues 1–27 (MKKPLFFIASACVTIYILFALSPSVYA) form the signal peptide. The next 6 helical transmembrane spans lie at 33-53 (GFLP…FFLV), 70-90 (LLLA…IPSV), 102-122 (LGAL…VLLF), 134-154 (TLGA…YVLF), 168-188 (VFLA…IQLA), and 208-228 (IFAV…VVVW).

Belongs to the CbiM family. Forms an energy-coupling factor (ECF) transporter complex composed of an ATP-binding protein (A component, CbiO), a transmembrane protein (T component, CbiQ) and 2 possible substrate-capture proteins (S components, CbiM and CbiN) of unknown stoichimetry.

It is found in the cell membrane. The protein operates within cofactor biosynthesis; adenosylcobalamin biosynthesis. Its function is as follows. Part of the energy-coupling factor (ECF) transporter complex CbiMNOQ involved in cobalt import. This chain is Cobalt transport protein CbiM, found in Anoxybacillus flavithermus (strain DSM 21510 / WK1).